A 299-amino-acid polypeptide reads, in one-letter code: Recombination-associated protein RdgC (299 aa).

The protein belongs to the RdgC family.

The protein localises to the cytoplasm. It localises to the nucleoid. Functionally, may be involved in recombination. This Laribacter hongkongensis (strain HLHK9) protein is Recombination-associated protein RdgC.